The primary structure comprises 653 residues: tRNA 5-methylaminomethyl-2-thiouridine biosynthesis bifunctional protein MnmC (653 aa).

Residues 1 to 233 (MKTAPITPGR…KRDITVARFT (233 aa)) are tRNA (mnm(5)s(2)U34)-methyltransferase. Positions 258–653 (IGAGLAGCAA…YALPRWRSDS (396 aa)) are FAD-dependent cmnm(5)s(2)U34 oxidoreductase.

This sequence in the N-terminal section; belongs to the methyltransferase superfamily. tRNA (mnm(5)s(2)U34)-methyltransferase family. In the C-terminal section; belongs to the DAO family. Requires FAD as cofactor.

The protein localises to the cytoplasm. It carries out the reaction 5-aminomethyl-2-thiouridine(34) in tRNA + S-adenosyl-L-methionine = 5-methylaminomethyl-2-thiouridine(34) in tRNA + S-adenosyl-L-homocysteine + H(+). Its function is as follows. Catalyzes the last two steps in the biosynthesis of 5-methylaminomethyl-2-thiouridine (mnm(5)s(2)U) at the wobble position (U34) in tRNA. Catalyzes the FAD-dependent demodification of cmnm(5)s(2)U34 to nm(5)s(2)U34, followed by the transfer of a methyl group from S-adenosyl-L-methionine to nm(5)s(2)U34, to form mnm(5)s(2)U34. The polypeptide is tRNA 5-methylaminomethyl-2-thiouridine biosynthesis bifunctional protein MnmC (Methylibium petroleiphilum (strain ATCC BAA-1232 / LMG 22953 / PM1)).